The sequence spans 90 residues: U7-theraphotoxin-Hhn1a 4 (90 aa).

A signal peptide spans 1–19 (MKTAIFTVVLALAVFAVLS). Residues 20–50 (FGWEANEEALSEEFTELIHEKEAASETEARE) constitute a propeptide that is removed on maturation. 3 disulfides stabilise this stretch: C51/C65, C58/C70, and C64/C81.

Belongs to the neurotoxin 10 (Hwtx-1) family. 13 (Hntx-13) subfamily. In terms of tissue distribution, expressed by the venom gland.

It localises to the secreted. Ion channel inhibitor. The chain is U7-theraphotoxin-Hhn1a 4 from Cyriopagopus hainanus (Chinese bird spider).